An 84-amino-acid chain; its full sequence is Anaphase-promoting complex subunit 11 (84 aa).

The RING-type; atypical zinc finger occupies 34–77; that stretch reads CPDCKLPGDDCPLIWGACNHAFHLHCILKWVNSQTSQAHCPMCR.

The protein belongs to the RING-box family. In terms of assembly, part of the APC/C complex composed of at least 10 subunits. Interacts with APC2.

The protein localises to the cytoplasm. It is found in the nucleus. It participates in protein modification; protein ubiquitination. Functionally, component of the anaphase promoting complex/cyclosome (APC/C), a cell cycle-regulated E3 ubiquitin-protein ligase complex that controls progression through mitosis and the G1 phase of the cell cycle. The APC/C complex controls several key steps in the cell cycle by mediating ubiquitination and subsequent degradation of target proteins such as cyclins. The APC/C complex is required for the female gametophyte development and is involved in several aspect of development by controlling cell division and cell elongation. Involved in the control of endoreduplication. May recruit the E2 ubiquitin-conjugating enzymes to the complex. This is Anaphase-promoting complex subunit 11 from Arabidopsis thaliana (Mouse-ear cress).